A 1610-amino-acid polypeptide reads, in one-letter code: Protein TASOR (1610 aa).

The tract at residues 1 to 96 (MATAAETEAP…PERPFRRSFQ (96 aa)) is disordered. Alanine 2 is subject to N-acetylalanine. The span at 41–51 (NGGGDGGGGAG) shows a compositional bias: gly residues. The segment covering 52–61 (PEETAAAEAA) has biased composition (low complexity). Serine 339 is modified (phosphoserine). Lysine 581 participates in a covalent cross-link: Glycyl lysine isopeptide (Lys-Gly) (interchain with G-Cter in SUMO2). Residues serine 628, serine 631, and serine 668 each carry the phosphoserine modification. Disordered stretches follow at residues 631 to 671 (SDYE…SLDY) and 687 to 710 (KKNVGGDPDPEDTKSKNVLKRKLE). Composition is skewed to basic and acidic residues over residues 652-671 (NSRDETTEPEQQKSSHSLDY) and 697-710 (EDTKSKNVLKRKLE). Serine 793 carries the phosphoserine modification. Glycyl lysine isopeptide (Lys-Gly) (interchain with G-Cter in SUMO2) cross-links involve residues lysine 816 and lysine 825. Serine 836 carries the phosphoserine modification. Lysine 866 is covalently cross-linked (Glycyl lysine isopeptide (Lys-Gly) (interchain with G-Cter in SUMO2)). Residues 915 to 941 (TGGNAGSPEDQHGKHGEKQTPDTLKGT) are disordered. A phosphoserine mark is found at serine 921 and lysine 928. Over residues 923–934 (EDQHGKHGEKQT) the composition is skewed to basic and acidic residues. Residue threonine 1004 is modified to Phosphothreonine. 2 positions are modified to phosphoserine: serine 1059 and serine 1508.

The protein belongs to the TASOR family. As to quaternary structure, component of the HUSH complex; at least composed of TASOR, PPHLN1 and MPHOSPH8. Interacts with MORC2; the interaction associateS MORC2 with the HUSH complex which recruits MORC2 to heterochromatic loci. Interacts with ZNF638; leading to recruitment of the HUSH complex to unintegrated retroviral DNA. Interacts with INPP5A, EML1, SV1L, GPSM2, ITGB3BP, CNTN1, ETFA, PSMD8, S100A10, MPHOSPH8, TMEM100, ALB, PARPBP, HCFC2, NCBP1 and SETDB1. As to expression, present in skin, brain and testis (at protein level). Ubiquitously expressed at low levels in the majority of the organs, expressed at higher levels in kidneys, spleen, thymus, seminal vesicles, uterus, and ovaries and its expression is almost six times higher in male tissues than in females. Highly expressed in seminiferous tubules with a strong signal in Sertoli cells, spermatogonia, and spermatocytes.

Its subcellular location is the nucleus. It is found in the chromosome. Its function is as follows. Component of the HUSH complex, a multiprotein complex that mediates epigenetic repression. The HUSH complex is recruited to genomic loci rich in H3K9me3 and is required to maintain transcriptional silencing by promoting recruitment of SETDB1, a histone methyltransferase that mediates further deposition of H3K9me3, as well as MORC2. Also represses L1 retrotransposons in collaboration with MORC2 and, probably, SETDB1, the silencing is dependent of repressive epigenetic modifications, such as H3K9me3 mark. Silencing events often occur within introns of transcriptionally active genes, and lead to the down-regulation of host gene expression. The HUSH complex is also involved in the silencing of unintegrated retroviral DNA by being recruited by ZNF638: some part of the retroviral DNA formed immediately after infection remains unintegrated in the host genome and is transcriptionally repressed. Plays a crucial role in early embryonic development. Involved in the organization of spindle poles and spindle apparatus assembly during zygotic division. Plays an important role in maintaining epiblast fitness or potency. This Mus musculus (Mouse) protein is Protein TASOR.